Here is a 191-residue protein sequence, read N- to C-terminus: ECF RNA polymerase sigma-E factor (191 aa).

Residues 1-153 form a binds RNAP core region; the sequence is MSEQLTDQVL…MAITLRELDG (153 aa). Residues 25 to 92 are sigma-70 factor domain-2; the sequence is LVVRYQHKVA…KNYLVAQGRR (68 aa). The Polymerase core binding motif lies at 48–61; it reads DVVQESFIKAYRAL. The segment at 129-180 is sigma-70 factor domain-4; the sequence is QIVFRTIESLPEDLRMAITLRELDGLSYEEIAAIMDCPVGTVRSRIFRAREA. The H-T-H motif DNA-binding region spans 156–175; that stretch reads YEEIAAIMDCPVGTVRSRIF.

Belongs to the sigma-70 factor family. ECF subfamily. As to quaternary structure, interacts transiently with the RNAP catalytic core formed by RpoA, RpoB, RpoC and RpoZ (2 alpha, 1 beta, 1 beta' and 1 omega subunit) to form the RNAP holoenzyme that can initiate transcription. Interacts 1:1 with anti-sigma-E factor RseA which prevents binding to RNAP catalytic core.

The protein resides in the cytoplasm. Its activity is regulated as follows. ECF sigma-E is held in an inactive form by its cognate anti-sigma factor (RseA) until released by regulated intramembrane proteolysis (RIP). RIP occurs when an extracytoplasmic signal (periplasmic, acid or heat stress) triggers a concerted proteolytic cascade to transmit information and elicit cellular responses. In S.typhimurium there are 2 cascades, the heat shock response which depends on DegS and RseP, and acid response which depends only on RseP. The anti-sigma factor RseA is an inner membrane protein, binding sigma-E in the cytoplasm and RseB in the periplasm. RseA is first cut extracytoplasmically (site-1 protease, S1P, by DegS), then within the membrane itself (site-2 protease, S2P, by RseP), while cytoplasmic proteases (predominantly ClpX-ClpP) finish degrading the regulatory protein, liberating sigma-E. Degradation of RseA requires 2 signals to activate DegS; an outer membrane protein (OMP) signal activates DegS, while an LPS signal causes release of RseB from RseA, freeing RseA to be cleaved. OMP stress can be abrogated by overexpression of the sRNA rybB. Its function is as follows. Sigma factors are initiation factors that promote the attachment of RNA polymerase (RNAP) to specific initiation sites and are then released. Extracytoplasmic function (ECF) sigma-E controls the envelope stress response, responding to periplasmic protein stress, increased levels of periplasmic lipopolysaccharide (LPS) as well as acid stress, heat shock and oxidative stress; it controls protein processing in the extracytoplasmic compartment. The polypeptide is ECF RNA polymerase sigma-E factor (rpoE) (Salmonella typhimurium (strain 14028s / SGSC 2262)).